A 143-amino-acid chain; its full sequence is NADH-quinone oxidoreductase subunit A (143 aa).

The next 3 helical transmembrane spans lie at 8–28 (FGNVFVFFLLGVVFVAGGYLT), 63–83 (FYVVALIFIIFDVEVVFLFPW), and 93–113 (FALVEALVFAGILILGLVYAW).

The protein belongs to the complex I subunit 3 family. NDH-1 is composed of 14 different subunits. Subunits NuoA, H, J, K, L, M, N constitute the membrane sector of the complex.

The protein resides in the cell inner membrane. The enzyme catalyses a quinone + NADH + 5 H(+)(in) = a quinol + NAD(+) + 4 H(+)(out). NDH-1 shuttles electrons from NADH, via FMN and iron-sulfur (Fe-S) centers, to quinones in the respiratory chain. The immediate electron acceptor for the enzyme in this species is believed to be a menaquinone. Couples the redox reaction to proton translocation (for every two electrons transferred, four hydrogen ions are translocated across the cytoplasmic membrane), and thus conserves the redox energy in a proton gradient. In Chlorobium phaeovibrioides (strain DSM 265 / 1930) (Prosthecochloris vibrioformis (strain DSM 265)), this protein is NADH-quinone oxidoreductase subunit A.